Consider the following 785-residue polypeptide: Cadherin-7 (785 aa).

The N-terminal stretch at 1 to 27 (MKLGKVELCRFLQLIALFLCFSGMNQA) is a signal peptide. Residues 28–47 (ELPRSRSKPYFQLGRSRTKR) constitute a propeptide that is removed on maturation. Topologically, residues 28–607 (ELPRSRSKPY…AYILPAGLST (580 aa)) are extracellular. 5 Cadherin domains span residues 49 to 153 (WVWN…EPKF), 154 to 262 (LDGP…PPRF), 263 to 377 (PRRS…PPVF), 378 to 482 (SSPL…APEF), and 482 to 599 (FAMD…AEAY). N-linked (GlcNAc...) asparagine glycans are attached at residues Asn-449 and Asn-530. The helical transmembrane segment at 608–628 (GALIAILACVLTLLVLILLIV) threads the bilayer. Over 629–785 (TMKRRKKEPL…YGNGQESLYS (157 aa)) the chain is Cytoplasmic.

The protein resides in the cell membrane. Functionally, cadherins are calcium-dependent cell adhesion proteins. They preferentially interact with themselves in a homophilic manner in connecting cells; cadherins may thus contribute to the sorting of heterogeneous cell types. The polypeptide is Cadherin-7 (Cdh7) (Rattus norvegicus (Rat)).